The sequence spans 257 residues: Urease accessory protein UreD (257 aa).

Belongs to the UreD family. As to quaternary structure, ureD, UreF and UreG form a complex that acts as a GTP-hydrolysis-dependent molecular chaperone, activating the urease apoprotein by helping to assemble the nickel containing metallocenter of UreC. The UreE protein probably delivers the nickel.

The protein localises to the cytoplasm. In terms of biological role, required for maturation of urease via the functional incorporation of the urease nickel metallocenter. The sequence is that of Urease accessory protein UreD from Ruegeria pomeroyi (strain ATCC 700808 / DSM 15171 / DSS-3) (Silicibacter pomeroyi).